Here is a 250-residue protein sequence, read N- to C-terminus: MRLDQRAQSDMRKIQLETDVNKHAEGSVLISVGDTRVLCTATVEEKVPPFLRGKRHGWINAEYAMLPRATAQRTGREAVRGKQTGRTMEIQRLISRALRSVVNLEKLGERTVWIDCDVLQADGGTRTAAITGGFLALVLAVDGLIQSGKLTDTPIKEGIAAVSVGKVGTELLLDLCYEEDAAADVDLNLVMTSSGKIVELQATGEEATFSRKEMLDMLELGEKGIEELLHAAEQSLGASWWYVGEEVEHK.

Phosphate-binding positions include R86 and G124–R126.

It belongs to the RNase PH family. Homohexameric ring arranged as a trimer of dimers.

It carries out the reaction tRNA(n+1) + phosphate = tRNA(n) + a ribonucleoside 5'-diphosphate. In terms of biological role, phosphorolytic 3'-5' exoribonuclease that plays an important role in tRNA 3'-end maturation. Removes nucleotide residues following the 3'-CCA terminus of tRNAs; can also add nucleotides to the ends of RNA molecules by using nucleoside diphosphates as substrates, but this may not be physiologically important. Probably plays a role in initiation of 16S rRNA degradation (leading to ribosome degradation) during starvation. This Exiguobacterium sibiricum (strain DSM 17290 / CCUG 55495 / CIP 109462 / JCM 13490 / 255-15) protein is Ribonuclease PH.